A 188-amino-acid polypeptide reads, in one-letter code: Probable manganese efflux pump MntP (188 aa).

The next 6 membrane-spanning stretches (helical) occupy residues 3–23, 41–61, 66–86, 106–128, 143–163, and 168–188; these read YTATVLLAFGMSMDAFAASIG, LIFGAVETLTPLIGWGLGILA, LEWNHWIAFVLLIFLGGRMII, WLLVTTAIATSLDAMAVGVGLAF, ATLIMSTLGMMIGRFIGPMLG, and ILGGVVLIGIGVQILWTHFHG.

This sequence belongs to the MntP (TC 9.B.29) family.

The protein localises to the cell inner membrane. Probably functions as a manganese efflux pump. The chain is Probable manganese efflux pump MntP from Salmonella heidelberg (strain SL476).